The following is a 296-amino-acid chain: Acetylglutamate kinase (296 aa).

Substrate is bound by residues 66 to 67, Arg-88, and Asn-191; that span reads GG.

This sequence belongs to the acetylglutamate kinase family. ArgB subfamily.

It localises to the cytoplasm. It catalyses the reaction N-acetyl-L-glutamate + ATP = N-acetyl-L-glutamyl 5-phosphate + ADP. The protein operates within amino-acid biosynthesis; L-arginine biosynthesis; N(2)-acetyl-L-ornithine from L-glutamate: step 2/4. In terms of biological role, catalyzes the ATP-dependent phosphorylation of N-acetyl-L-glutamate. This chain is Acetylglutamate kinase, found in Lawsonia intracellularis (strain PHE/MN1-00).